A 540-amino-acid chain; its full sequence is Chaperonin GroEL 1 (540 aa).

Residues 29 to 32 (TLGP), 86 to 90 (DGTTT), glycine 413, 477 to 479 (NAA), and aspartate 493 contribute to the ATP site.

This sequence belongs to the chaperonin (HSP60) family. Forms a cylinder of 14 subunits composed of two heptameric rings stacked back-to-back. Interacts with the co-chaperonin GroES.

It is found in the cytoplasm. The enzyme catalyses ATP + H2O + a folded polypeptide = ADP + phosphate + an unfolded polypeptide.. Functionally, together with its co-chaperonin GroES, plays an essential role in assisting protein folding. The GroEL-GroES system forms a nano-cage that allows encapsulation of the non-native substrate proteins and provides a physical environment optimized to promote and accelerate protein folding. In Salinispora arenicola (strain CNS-205), this protein is Chaperonin GroEL 1.